A 250-amino-acid chain; its full sequence is PF03932 family protein CutC (250 aa).

It belongs to the CutC family.

The protein resides in the cytoplasm. The polypeptide is PF03932 family protein CutC (Vibrio vulnificus (strain CMCP6)).